We begin with the raw amino-acid sequence, 89 residues long: Small ribosomal subunit protein uS15 (89 aa).

It belongs to the universal ribosomal protein uS15 family. In terms of assembly, part of the 30S ribosomal subunit. Forms a bridge to the 50S subunit in the 70S ribosome, contacting the 23S rRNA.

Its function is as follows. One of the primary rRNA binding proteins, it binds directly to 16S rRNA where it helps nucleate assembly of the platform of the 30S subunit by binding and bridging several RNA helices of the 16S rRNA. Forms an intersubunit bridge (bridge B4) with the 23S rRNA of the 50S subunit in the ribosome. This is Small ribosomal subunit protein uS15 from Marinobacter nauticus (strain ATCC 700491 / DSM 11845 / VT8) (Marinobacter aquaeolei).